A 168-amino-acid chain; its full sequence is Transcription antitermination protein NusB (168 aa).

It belongs to the NusB family.

Its function is as follows. Involved in transcription antitermination. Required for transcription of ribosomal RNA (rRNA) genes. Binds specifically to the boxA antiterminator sequence of the ribosomal RNA (rrn) operons. The protein is Transcription antitermination protein NusB of Chlamydia trachomatis serovar L2 (strain ATCC VR-902B / DSM 19102 / 434/Bu).